We begin with the raw amino-acid sequence, 264 residues long: Thymidylate synthase (264 aa).

Residue Arg-21 coordinates dUMP. Residue His-51 coordinates (6R)-5,10-methylene-5,6,7,8-tetrahydrofolate. 126–127 (RR) serves as a coordination point for dUMP. Cys-146 serves as the catalytic Nucleophile. DUMP-binding positions include 166–169 (RSCD), Asn-177, and 207–209 (HLY). Residue Asp-169 coordinates (6R)-5,10-methylene-5,6,7,8-tetrahydrofolate. Ala-263 contacts (6R)-5,10-methylene-5,6,7,8-tetrahydrofolate.

Belongs to the thymidylate synthase family. Bacterial-type ThyA subfamily. In terms of assembly, homodimer.

Its subcellular location is the cytoplasm. The enzyme catalyses dUMP + (6R)-5,10-methylene-5,6,7,8-tetrahydrofolate = 7,8-dihydrofolate + dTMP. It participates in pyrimidine metabolism; dTTP biosynthesis. Functionally, catalyzes the reductive methylation of 2'-deoxyuridine-5'-monophosphate (dUMP) to 2'-deoxythymidine-5'-monophosphate (dTMP) while utilizing 5,10-methylenetetrahydrofolate (mTHF) as the methyl donor and reductant in the reaction, yielding dihydrofolate (DHF) as a by-product. This enzymatic reaction provides an intracellular de novo source of dTMP, an essential precursor for DNA biosynthesis. This is Thymidylate synthase from Serratia proteamaculans (strain 568).